The primary structure comprises 250 residues: Probable transcriptional regulatory protein SACE_2018 (250 aa).

This sequence belongs to the TACO1 family.

The protein resides in the cytoplasm. The chain is Probable transcriptional regulatory protein SACE_2018 from Saccharopolyspora erythraea (strain ATCC 11635 / DSM 40517 / JCM 4748 / NBRC 13426 / NCIMB 8594 / NRRL 2338).